The following is a 2803-amino-acid chain: Microtubule-associated protein 1A (2803 aa).

Phosphoserine occurs at positions 114, 117, 118, 121, and 155. Tyr-177 is subject to Phosphotyrosine. Disordered regions lie at residues 302–466 (GAVP…DLKP) and 486–516 (IDRS…PLPT). Phosphoserine is present on residues Ser-319, Ser-322, and Ser-384. The span at 335–390 (AKREEVVEEGAKEARSELAKELAKTEKKAKESSEKPPEKPAKPERVKTESSEALKA) shows a compositional bias: basic and acidic residues. The span at 391 to 406 (EKRKLIKDKVGKKHLK) shows a compositional bias: basic residues. 2 stretches are compositionally biased toward basic and acidic residues: residues 407-464 (EKIS…KPDL) and 486-499 (IDRS…KELS). 8 repeat units span residues 415–417 (KKD), 420–422 (KKE), 427–429 (RKE), 431–433 (KKD), 436–438 (RKE), 440–442 (KKD), 444–446 (KKE), and 449–451 (RKD). The tract at residues 415-541 (KKDKEKKEIK…TQDFEEMKRE (127 aa)) is 9 X 3 AA repeats of K-K-[DE]. Thr-504 is subject to Phosphothreonine. 2 positions are modified to phosphoserine: Ser-526 and Ser-527. Copy 9 of the repeat occupies 539–541 (KRE). Composition is skewed to basic and acidic residues over residues 539–554 (KREE…DTGL) and 585–596 (QEEHVMKEKELV). Disordered regions lie at residues 539–712 (KREE…KAPE), 734–806 (YIQD…GTPE), 847–1080 (EDQS…VNID), 1109–1548 (TGPI…EKKD), and 1573–1605 (EENH…EKVK). A phosphoserine mark is found at Ser-605 and Ser-612. The residue at position 616 (Thr-616) is a Phosphothreonine. Residues 623–667 (WEEKKQREAERLPDRTEAREESEPEVKEDVIEKAELEEMEEVHPS) are compositionally biased toward basic and acidic residues. Phosphoserine occurs at positions 644, 667, and 787. 2 stretches are compositionally biased toward polar residues: residues 847 to 860 (EDQS…PQTE) and 871 to 883 (TVTS…TEAT). Ser-874, Ser-877, Ser-878, and Ser-891 each carry phosphoserine. Thr-894 carries the post-translational modification Phosphothreonine. Ser-896, Ser-900, Ser-909, Ser-986, Ser-996, Ser-1004, Ser-1013, Ser-1019, and Ser-1029 each carry phosphoserine. Over residues 1031–1065 (GDTKRTPGVGKEDAAEETVKPGPEEGTLEKEEKVP) the composition is skewed to basic and acidic residues. A phosphoserine mark is found at Ser-1069, Ser-1144, Ser-1146, Ser-1160, Ser-1172, Ser-1190, Ser-1200, Ser-1203, Ser-1209, Ser-1218, Ser-1221, and Ser-1264. Basic and acidic residues predominate over residues 1131-1146 (KPQKDEVLRYPDRSLS). A compositionally biased stretch (polar residues) spans 1154 to 1169 (SVLSVPSPDTANQEPT). Polar residues-rich tracts occupy residues 1211–1224 (DVSS…SLGT) and 1264–1278 (SPPT…AQTD). The segment covering 1289 to 1299 (PASSFSHSTPS) has biased composition (low complexity). A phosphoserine mark is found at Ser-1326, Ser-1329, Ser-1544, Ser-1600, and Ser-1626. 2 stretches are compositionally biased toward basic and acidic residues: residues 1338–1548 (IAIK…EKKD) and 1586–1605 (QEDK…EKVK). The segment covering 1632–1642 (RAREQEEKYWR) has biased composition (basic and acidic residues). Disordered regions lie at residues 1632–1684 (RARE…RYWR), 1713–1879 (DGQG…FSWG), and 1892–2673 (EGAA…LVNG). Ser-1654 is modified (phosphoserine). The segment covering 1655–1666 (PTREEPAGEQKE) has biased composition (basic and acidic residues). Phosphoserine is present on residues Ser-1675, Ser-1749, Ser-1762, Ser-1776, Ser-1791, Ser-1797, Ser-1801, Ser-1812, and Ser-1818. Residues 1852-1867 (LPPAPLSPAPGPPTPA) show a composition bias toward pro residues. Residues 1907 to 1929 (KDYRKAEGEREEEGRAEAPDKSS) show a composition bias toward basic and acidic residues. Residue Ser-1931 is modified to Phosphoserine. The segment covering 1951–1964 (PEQREPTPYPDERS) has biased composition (basic and acidic residues). A Phosphothreonine modification is found at Thr-1957. Residues 2019–2033 (SPISPKSLQSDTPTF) are compositionally biased toward polar residues. Position 2022 is a phosphoserine (Ser-2022). Residues 2042–2066 (TVPPRPEPGPSMEPSLTPPAVPPRA) are compositionally biased toward pro residues. At Thr-2058 the chain carries Phosphothreonine. Phosphoserine occurs at positions 2074, 2104, 2106, and 2108. Residues 2086-2122 (PDRRSPSPKESGRSHWDDSTSDSELEKGAREQPEKEA) show a composition bias toward basic and acidic residues. Residues 2175–2184 (PAPPQLPSPA) show a composition bias toward pro residues. Residues Ser-2235, Ser-2252, Ser-2256, Ser-2259, and Ser-2260 each carry the phosphoserine modification. A compositionally biased stretch (polar residues) spans 2257-2268 (EGSSSEATTPVI). Low complexity predominate over residues 2312–2325 (ASLDLALAPAPSLP). Ser-2449 is subject to Phosphoserine. Positions 2461–2473 (IDDRDLSTEEVRL) are enriched in basic and acidic residues. Low complexity predominate over residues 2502–2514 (SASDSGSSQSDSD). The segment covering 2559–2575 (DPPPLPQPDPRPSPPRP) has biased composition (pro residues). Basic and acidic residues predominate over residues 2590–2602 (GRVERLREKEKVQ). Ser-2649 and Ser-2664 each carry phosphoserine.

It belongs to the MAP1 family. In terms of assembly, 3 different light chains, LC1 (a cleavage product of MAP1B), LC2 (a cleavage product of MAP1A) and LC3 (produced by one of the MAP1LC3 genes), can associate with the MAP1A or MAP1B heavy chains. Interacts with TIAM2. Interacts with guanylate kinase-like domain of DLG1, DLG2 and DLG4. Binds to CSNK1D. As to quaternary structure, interacts with ELAVL4. Phosphorylated by CSNK1D. In terms of processing, LC2 is generated from MAP1A by proteolytic processing. In terms of tissue distribution, brain.

It is found in the cytoplasm. The protein resides in the cytoskeleton. In terms of biological role, structural protein involved in the filamentous cross-bridging between microtubules and other skeletal elements. The sequence is that of Microtubule-associated protein 1A (MAP1A) from Homo sapiens (Human).